The chain runs to 66 residues: Alpha-bisabolene synthase (66 aa).

It belongs to the terpene synthase family. Tpsd subfamily. It depends on Mn(2+) as a cofactor. K(+) is required as a cofactor.

It is found in the cytoplasm. It carries out the reaction (2E,6E)-farnesyl diphosphate = (E,R)-alpha-bisabolene + diphosphate. It participates in terpene metabolism; oleoresin biosynthesis. Functionally, involved in defensive oleoresin formation in conifers in response to insect attack or other injury. Involved in sesquiterpene (C15) olefins biosynthesis. This Pseudotsuga menziesii (Douglas-fir) protein is Alpha-bisabolene synthase.